The primary structure comprises 451 residues: Crh-like protein 2 (451 aa).

Residues methionine 1–alanine 21 form the signal peptide. The 220-residue stretch at glutamine 22 to valine 241 folds into the GH16 domain. A disulfide bridge links cysteine 27 with cysteine 34. Asparagine 31, asparagine 43, asparagine 49, and asparagine 59 each carry an N-linked (GlcNAc...) asparagine glycan. The active-site Nucleophile is the glutamate 121. Glutamate 125 serves as the catalytic Proton donor. Residue glutamate 125 coordinates chitin. N-linked (GlcNAc...) asparagine glycosylation is found at asparagine 130, asparagine 143, and asparagine 165. Residues arginine 206, tryptophan 210, and threonine 222 each contribute to the chitin site. Asparagine 273 is a glycosylation site (N-linked (GlcNAc...) asparagine). A helical membrane pass occupies residues valine 305–leucine 325. Asparagine 366 carries an N-linked (GlcNAc...) asparagine glycan.

The protein belongs to the glycosyl hydrolase 16 family. CRH1 subfamily. Forms homodimers as well as heterodimers with other crh protein members crh1 and crh3. Dimerization may be necessary for the transglycosylation activity.

Its subcellular location is the membrane. It carries out the reaction Random endo-hydrolysis of N-acetyl-beta-D-glucosaminide (1-&gt;4)-beta-linkages in chitin and chitodextrins.. Its function is as follows. Dual chitinase/transglycosylase that plays a role in cell wall architecture. Chitinase and transglycosylase activities are coupled. Required for the polysaccharide cross-linking at the septa and the cell wall. More specifically, transfers chitin to 1,6-beta-glucan in the cell wall. This chain is Crh-like protein 2, found in Botryotinia fuckeliana (strain B05.10) (Noble rot fungus).